The chain runs to 262 residues: Small ribosomal subunit protein eS1 (262 aa).

This sequence belongs to the eukaryotic ribosomal protein eS1 family. As to quaternary structure, component of the small ribosomal subunit. Mature ribosomes consist of a small (40S) and a large (60S) subunit. The 40S subunit contains about 33 different proteins and 1 molecule of RNA (18S). The 60S subunit contains about 49 different proteins and 3 molecules of RNA (25S, 5.8S and 5S).

It is found in the cytoplasm. This Plasmodium vivax (strain Salvador I) protein is Small ribosomal subunit protein eS1.